Here is a 559-residue protein sequence, read N- to C-terminus: Thermosome subunit alpha (559 aa).

Residues 536-552 (SGEKKGEKKEGGEEEKS) show a composition bias toward basic and acidic residues. A disordered region spans residues 536–559 (SGEKKGEKKEGGEEEKSSTPSSLE).

This sequence belongs to the TCP-1 chaperonin family. In terms of assembly, forms a Heterooligomeric complex of two stacked nine-membered rings; one of alpha and the other of beta subunits.

Molecular chaperone; binds unfolded polypeptides in vitro, and has a weak ATPase activity. The chain is Thermosome subunit alpha (thsA) from Sulfurisphaera tokodaii (strain DSM 16993 / JCM 10545 / NBRC 100140 / 7) (Sulfolobus tokodaii).